Reading from the N-terminus, the 207-residue chain is Outer-membrane lipoprotein LolB (207 aa).

Positions 1–21 are cleaved as a signal peptide; the sequence is MPMRKRHFYRLLPLASLLLAA. Residue Cys22 is the site of N-palmitoyl cysteine attachment. A lipid anchor (S-diacylglycerol cysteine) is attached at Cys22.

Belongs to the LolB family. Monomer.

The protein resides in the cell outer membrane. Plays a critical role in the incorporation of lipoproteins in the outer membrane after they are released by the LolA protein. This chain is Outer-membrane lipoprotein LolB, found in Yersinia pseudotuberculosis serotype IB (strain PB1/+).